Consider the following 249-residue polypeptide: Phosphoadenosine 5'-phosphosulfate reductase (249 aa).

Cysteine 230 (nucleophile; cysteine thiosulfonate intermediate) is an active-site residue.

The protein belongs to the PAPS reductase family. CysH subfamily.

It localises to the cytoplasm. It carries out the reaction [thioredoxin]-disulfide + sulfite + adenosine 3',5'-bisphosphate + 2 H(+) = [thioredoxin]-dithiol + 3'-phosphoadenylyl sulfate. The protein operates within sulfur metabolism; hydrogen sulfide biosynthesis; sulfite from sulfate: step 3/3. In terms of biological role, catalyzes the formation of sulfite from phosphoadenosine 5'-phosphosulfate (PAPS) using thioredoxin as an electron donor. This chain is Phosphoadenosine 5'-phosphosulfate reductase, found in Synechocystis sp. (strain ATCC 27184 / PCC 6803 / Kazusa).